A 297-amino-acid polypeptide reads, in one-letter code: Phosphatidylglycerol--prolipoprotein diacylglyceryl transferase (297 aa).

Transmembrane regions (helical) follow at residues 20–40, 57–77, 107–127, and 133–153; these read FITI…GLFI, EILP…YVIF, WEGG…IIFF, and IHLK…QSIG. Arg154 serves as a coordination point for a 1,2-diacyl-sn-glycero-3-phospho-(1'-sn-glycerol). Helical transmembrane passes span 193–213, 225–245, and 266–286; these read PTFL…ILIF, GFIS…IEGL, and AQFI…FLRL.

The protein belongs to the Lgt family.

It is found in the cell inner membrane. The catalysed reaction is L-cysteinyl-[prolipoprotein] + a 1,2-diacyl-sn-glycero-3-phospho-(1'-sn-glycerol) = an S-1,2-diacyl-sn-glyceryl-L-cysteinyl-[prolipoprotein] + sn-glycerol 1-phosphate + H(+). It participates in protein modification; lipoprotein biosynthesis (diacylglyceryl transfer). In terms of biological role, catalyzes the transfer of the diacylglyceryl group from phosphatidylglycerol to the sulfhydryl group of the N-terminal cysteine of a prolipoprotein, the first step in the formation of mature lipoproteins. In Prochlorococcus marinus (strain MIT 9301), this protein is Phosphatidylglycerol--prolipoprotein diacylglyceryl transferase.